Here is a 157-residue protein sequence, read N- to C-terminus: MFDVLMYLFETYIHNEAEMRVDQDKLTRDLTDAGFEREDIYNALMWLEKLADYQEGLVEPMQLASDPLSLRVYTEEECQRLDASCRGFLLFLEQIQVLNLETREMVIERVLALDTAEFELEDLKWVILMVLFNIPGCENAYQQMEELLFEVNEGMLH.

The protein belongs to the Smg family.

The sequence is that of Protein Smg from Klebsiella pneumoniae (strain 342).